The following is a 1107-amino-acid chain: Miniconductance mechanosensitive channel MscM (1107 aa).

The first 19 residues, 1 to 19, serve as a signal peptide directing secretion; the sequence is MRLIITFLMAWCLSWGAYA. The next 11 membrane-spanning stretches (helical) occupy residues 467–487, 522–542, 551–571, 600–620, 628–648, 674–694, 698–718, 785–805, 828–848, 875–895, and 910–930; these read VMMLTSKETILPLFGALILVG, LFWSILVASPLPVLWMTLGYG, LAVAIGDGVTATVPLLWVVMI, YLMSIGLIVPLIMALMMFDNL, SLGRLCFILICGALAVVTLSL, MMIGAPLVAILASAVGYLATA, LARLETSVAIWFLLLVVYHVI, ILMLIALLSVIVLWSEIHSAF, PITLGAVLIAILVFIITTQLV, TITKYLLMLIGGLVGFSMIGI, and GLGFGLQEIFANFISGLIILF.

The protein belongs to the MscS (TC 1.A.23) family. As to quaternary structure, homoheptamer.

It localises to the cell inner membrane. Mechanosensitive channel that protects cells against hypoosmotic stress when highly overexpressed. Gates spontaneously in response to increased membrane tension. This is Miniconductance mechanosensitive channel MscM (mscM) from Escherichia coli (strain K12).